The sequence spans 137 residues: Kunitz-type trypsin inhibitor alpha chain (137 aa).

Residues cysteine 40 and cysteine 86 are joined by a disulfide bond.

This sequence belongs to the protease inhibitor I3 (leguminous Kunitz-type inhibitor) family. Heterodimer of an alpha and a beta chain linked by a disulfide bond.

Its function is as follows. Inhibition of trypsin. The sequence is that of Kunitz-type trypsin inhibitor alpha chain from Neltuma juliflora (Mesquite).